A 301-amino-acid chain; its full sequence is Putative S-adenosyl-L-methionine-dependent methyltransferase MUL_0450 (301 aa).

S-adenosyl-L-methionine is bound by residues D127 and 156 to 157 (DL).

Belongs to the UPF0677 family.

In terms of biological role, exhibits S-adenosyl-L-methionine-dependent methyltransferase activity. In Mycobacterium ulcerans (strain Agy99), this protein is Putative S-adenosyl-L-methionine-dependent methyltransferase MUL_0450.